Consider the following 165-residue polypeptide: E3 ubiquitin ligase complex SCF subunit sconC (165 aa).

Residues 106–165 (ILAANYLDIKALLDVGCKTVANMIKGKSPEEIRKTFNIQNDFTPEEEDQIRRENEWAEDR) are interaction with the F-box domain of F-box proteins.

Belongs to the SKP1 family. In terms of assembly, component of the SCF (SKP1-CUL1-F-box protein) E3 ubiquitin ligase complexes.

It functions in the pathway protein modification; protein ubiquitination. Functionally, essential component of the SCF (SKP1-CUL1-F-box protein) E3 ubiquitin ligase complexes, which mediate the ubiquitination and subsequent proteasomal degradation of target proteins. Controls sulfur metabolite repression, probably by mediating the inactivation or degradation of the metR transcription factor. This Arthroderma otae (strain ATCC MYA-4605 / CBS 113480) (Microsporum canis) protein is E3 ubiquitin ligase complex SCF subunit sconC (sconC).